Here is a 90-residue protein sequence, read N- to C-terminus: Bombyxin B-6 (90 aa).

Positions 1 to 20 (MMKTSVMFMLVVVISLMCSS) are cleaved as a signal peptide. 3 disulfide bridges follow: Cys-30–Cys-76, Cys-42–Cys-89, and Cys-75–Cys-80. The propeptide at 49-67 (GVAQYAPYFWTRQYLGSRG) is c peptide like.

The protein belongs to the insulin family. Heterodimer of a B chain and an A chain linked by two disulfide bonds.

It is found in the secreted. Brain peptide responsible for activation of prothoracic glands to produce ecdysone in insects. The chain is Bombyxin B-6 (BBXB6) from Bombyx mori (Silk moth).